A 358-amino-acid chain; its full sequence is MEDTLYKSLKSIKEKYDSNEKKLLLPEVFNNIKEYTKISKENNSISEIVENFNKFLINEQTIKDAKILLDEKDEEMVSFAKNEIHKSELENQELEKKLRILILPKDENDERNVIIEIRGAAGGDEANIFAGDLLKMYNKWADINKMKLKLLDYANASSGGFSQVTFLVEGDKAYSKLKFESGVHRVQRIPVTETQGRVHTSTTTVTVMPEVDDVAEVEINPVDLKIDTFRSSGPGGQSVNTTDSAVRITHLPSGIVVSSQDEKSQISNRESALKILKSKLYDLEIKKRNEETGKFRKLAGSGARSEKIRTYNYPQDRITDHRIGFSTSLKIAMEGKINNIIEALHAEEQAEKIKEANL.

Residue Gln237 is modified to N5-methylglutamine.

Belongs to the prokaryotic/mitochondrial release factor family. Post-translationally, methylated by PrmC. Methylation increases the termination efficiency of RF1.

Its subcellular location is the cytoplasm. Its function is as follows. Peptide chain release factor 1 directs the termination of translation in response to the peptide chain termination codons UAG and UAA. In Mycoplasma mobile (strain ATCC 43663 / 163K / NCTC 11711) (Mesomycoplasma mobile), this protein is Peptide chain release factor 1.